The chain runs to 383 residues: Acetyl-CoA acetyltransferase (383 aa).

Cys85 functions as the Acyl-thioester intermediate in the catalytic mechanism. 4 residues coordinate CoA: Cys206, Ser207, Ile209, and Lys328. The active-site Proton acceptor is His332.

The protein belongs to the thiolase-like superfamily. Thiolase family. In terms of assembly, interacts with HMG-CoA synthase (HMGCS) that catalyzes the second step in the pathway and with a DUF35 protein. The acetoacetyl-CoA thiolase/HMG-CoA synthase complex channels the intermediate via a fused CoA-binding site, which allows for efficient coupling of the endergonic thiolase reaction with the exergonic HMGCS reaction.

It carries out the reaction 2 acetyl-CoA = acetoacetyl-CoA + CoA. Its pathway is metabolic intermediate biosynthesis; (R)-mevalonate biosynthesis; (R)-mevalonate from acetyl-CoA: step 1/3. In terms of biological role, catalyzes the condensation of two acetyl-coA molecules into acetoacetyl-CoA. Functions in the mevalonate (MVA) pathway leading to isopentenyl diphosphate (IPP), a key precursor for the biosynthesis of isoprenoid compounds that are building blocks of archaeal membrane lipids. The chain is Acetyl-CoA acetyltransferase from Methanothermobacter thermautotrophicus (strain ATCC 29096 / DSM 1053 / JCM 10044 / NBRC 100330 / Delta H) (Methanobacterium thermoautotrophicum).